Reading from the N-terminus, the 231-residue chain is MGQKVNPIGLRLGINRNWESRWFPVKSAIPENISEDYKIRKFLKAKLYYAGINQILIERTAKKLRVTIVAARPGVIIGKKGSEIENLKNEVVALLKKDVTINIKEERRPGSSAQLAAENVAMQLEKRVAFRRAMKKVIQSAQKAGAKGIKISVAGRLGGAEMARTEWYLEGRVPLHTLRAKIDYGFAEAHTTYGNIGVKVWIFKGEVLQKGIQAEKTDEAPKKSRRSRRGR.

The region spanning 39 to 107 (IRKFLKAKLY…DVTINIKEER (69 aa)) is the KH type-2 domain.

The protein belongs to the universal ribosomal protein uS3 family. In terms of assembly, part of the 30S ribosomal subunit. Forms a tight complex with proteins S10 and S14.

Binds the lower part of the 30S subunit head. Binds mRNA in the 70S ribosome, positioning it for translation. In Campylobacter hominis (strain ATCC BAA-381 / DSM 21671 / CCUG 45161 / LMG 19568 / NCTC 13146 / CH001A), this protein is Small ribosomal subunit protein uS3.